The primary structure comprises 217 residues: Killer cell lectin-like receptor subfamily B member 1F (217 aa).

The Cytoplasmic segment spans residues 1-45; sequence MDTSRVYGNVKTFRSPGHKQASFPSLSTDACRCPHWHHLALKLGC. The LCK-binding motif motif lies at 31–34; it reads CRCP. A helical; Signal-anchor for type II membrane protein transmembrane segment spans residues 46 to 66; sequence ATLILLLLTLIGLSVFVRFLV. The Extracellular segment spans residues 67-217; the sequence is QKPLIEKCSM…WICQKTLKHV (151 aa). Positions 101-211 constitute a C-type lectin domain; it reads HRNKCLIISQ…CSSDNHWICQ (111 aa). 2 cysteine pairs are disulfide-bonded: C122/C210 and C189/C202.

As to expression, expressed in natural killer cells and a subset of T-cells.

The protein resides in the membrane. Its function is as follows. Binds CLEC2I/Clr-g leading to activation of natural killer cells or stimulation of IL-2 production and proliferation of T-cells in response to antigen stimulation. May contribute to the formation of the immunological synapse between T-cells and antigen-presenting dendritic cells. The chain is Killer cell lectin-like receptor subfamily B member 1F from Rattus norvegicus (Rat).